A 245-amino-acid chain; its full sequence is Aquaporin SIP1-1 (245 aa).

2 helical membrane passes run 14 to 34 (AVVT…TAAV) and 55 to 75 (LLSV…GASF). Positions 76 to 78 (NPT) match the NPA 1 motif. Transmembrane regions (helical) follow at residues 100–120 (FPAQ…LMPA), 138–158 (GALA…WVIV), and 164–184 (VILK…AGAE). An NPA 2 motif is present at residues 191 to 193 (NPA). Residues 213–233 (VYWICPFIGAMLAGWIFRVVF) traverse the membrane as a helical segment.

It belongs to the MIP/aquaporin (TC 1.A.8) family. SIP (TC 1.A.8.10) subfamily.

The protein localises to the membrane. Functionally, aquaporins facilitate the transport of water and small neutral solutes across cell membranes. This Zea mays (Maize) protein is Aquaporin SIP1-1 (SIP1-1).